Here is a 119-residue protein sequence, read N- to C-terminus: Large ribosomal subunit protein bL20 (119 aa).

It belongs to the bacterial ribosomal protein bL20 family.

Functionally, binds directly to 23S ribosomal RNA and is necessary for the in vitro assembly process of the 50S ribosomal subunit. It is not involved in the protein synthesizing functions of that subunit. The sequence is that of Large ribosomal subunit protein bL20 from Azoarcus sp. (strain BH72).